We begin with the raw amino-acid sequence, 234 residues long: Accessory gland protein Acp29AB (234 aa).

An N-terminal signal peptide occupies residues 1–21 (MYASNLLYLLALWNLWDLSGG). 2 N-linked (GlcNAc...) asparagine glycosylation sites follow: N61 and N164. Residues 137–234 (VTCRKMNGHL…SFVCQADQWA (98 aa)) form the C-type lectin domain. 2 cysteine pairs are disulfide-bonded: C139–C228 and C207–C220.

As to expression, main cells of the accessory gland and in seminal fluid.

The protein localises to the secreted. Its function is as follows. Responsible for physiological and behavioral changes in mated female flies. This is Accessory gland protein Acp29AB (Acp29AB) from Drosophila melanogaster (Fruit fly).